Consider the following 219-residue polypeptide: Protein DCL homolog, chloroplastic (219 aa).

The N-terminal 48 residues, 1 to 48 (MSLASIPSSSPVASPYFRCRTYIFSFSSSPLCLYFPRGDSTSLRPRVR), are a transit peptide targeting the chloroplast. A disordered region spans residues 70-96 (LRRPRIASEESSEEEEEEEEENSEGDE). Residues 79–96 (ESSEEEEEEEEENSEGDE) show a composition bias toward acidic residues.

Expressed in leaves, stems, flowers and siliques.

It localises to the plastid. It is found in the chloroplast. In terms of biological role, required for normal plastid function and plant development. Required for correct plastid ribosome assembly. Required for processing and maturation of 4.5S rRNA. This is Protein DCL homolog, chloroplastic from Arabidopsis thaliana (Mouse-ear cress).